The primary structure comprises 173 residues: Ribosomal RNA large subunit methyltransferase H (173 aa).

Positions 89 and 121 each coordinate S-adenosyl-L-methionine.

It belongs to the RNA methyltransferase RlmH family. In terms of assembly, homodimer.

The protein resides in the cytoplasm. The enzyme catalyses pseudouridine(1915) in 23S rRNA + S-adenosyl-L-methionine = N(3)-methylpseudouridine(1915) in 23S rRNA + S-adenosyl-L-homocysteine + H(+). In terms of biological role, specifically methylates the pseudouridine at position 1915 (m3Psi1915) in 23S rRNA. The protein is Ribosomal RNA large subunit methyltransferase H of Chelativorans sp. (strain BNC1).